Here is a 223-residue protein sequence, read N- to C-terminus: N-terminal Xaa-Pro-Lys N-methyltransferase 1 (223 aa).

Met1 carries the post-translational modification N-acetylmethionine. Residue Thr2 is modified to N-acetylthreonine; in N-terminal Xaa-Pro-Lys N-methyltransferase 1, N-terminally processed. Residues Gly69, Arg74, 91 to 93 (DVT), 119 to 120 (LQ), and Gln135 each bind S-adenosyl-L-methionine.

This sequence belongs to the methyltransferase superfamily. NTM1 family.

It localises to the nucleus. It carries out the reaction N-terminal L-alanyl-L-prolyl-L-lysyl-[protein] + 3 S-adenosyl-L-methionine = N-terminal N,N,N-trimethyl-L-alanyl-L-prolyl-L-lysyl-[protein] + 3 S-adenosyl-L-homocysteine + 3 H(+). The enzyme catalyses N-terminal L-seryl-L-prolyl-L-lysyl-[protein] + 3 S-adenosyl-L-methionine = N-terminal N,N,N-trimethyl-L-seryl-L-prolyl-L-lysyl-[protein] + 3 S-adenosyl-L-homocysteine + 3 H(+). It catalyses the reaction N-terminal L-prolyl-L-prolyl-L-lysyl-[protein] + 2 S-adenosyl-L-methionine = N-terminal N,N-dimethyl-L-prolyl-L-prolyl-L-lysyl-[protein] + 2 S-adenosyl-L-homocysteine + 2 H(+). Distributive alpha-N-methyltransferase that methylates the N-terminus of target proteins containing the N-terminal motif [Ala/Gly/Pro/Ser]-Pro-Lys when the initiator Met is cleaved. Specifically catalyzes mono-, di- or tri-methylation of the exposed alpha-amino group of the Ala, Gly or Ser residue in the [Ala/Gly/Ser]-Pro-Lys motif and mono- or di-methylation of Pro in the Pro-Pro-Lys motif. Some of the substrates may be primed by NTMT2-mediated monomethylation. Catalyzes the trimethylation of the N-terminal Gly in CENPA (after removal of Met-1). Responsible for the N-terminal methylation of KLHL31, MYL2, MYL3, RB1, RCC1, RPL23A and SET. Required during mitosis for normal bipolar spindle formation and chromosome segregation via its action on RCC1. This Ailuropoda melanoleuca (Giant panda) protein is N-terminal Xaa-Pro-Lys N-methyltransferase 1 (NTMT1).